Consider the following 396-residue polypeptide: Na(+)/H(+) antiporter NhaA (396 aa).

The next 11 helical transmembrane spans lie at 17–37, 59–79, 97–117, 127–147, 156–176, 181–201, 206–226, 260–280, 292–312, 333–353, and 368–388; these read FSGLLLILFCFLAIFISNTNF, FSLTNIVNDILMTFFFLEIGI, ILPGIAAIGGMIFPALIYNFI, GWAITVATDIAFAVGVLKILG, IFLLSLAIFDDIGAILIIAFF, IDQYMILLSTLVILTILSINY, CIYIYIIFGILLWESIFLSGI, SLSFLNKYFILPIFAFFNSGI, LLPFGIFFGLVLGKPIGVFLF, IAGISFLCGIGFTMSIFISNL, and FSILISSIVSSVIGFLFLYFL.

Belongs to the NhaA Na(+)/H(+) (TC 2.A.33) antiporter family.

The protein localises to the cell membrane. It carries out the reaction Na(+)(in) + 2 H(+)(out) = Na(+)(out) + 2 H(+)(in). Functionally, na(+)/H(+) antiporter that extrudes sodium in exchange for external protons. This Wigglesworthia glossinidia brevipalpis protein is Na(+)/H(+) antiporter NhaA.